We begin with the raw amino-acid sequence, 420 residues long: Gamma-glutamyl phosphate reductase (420 aa).

The protein belongs to the gamma-glutamyl phosphate reductase family.

Its subcellular location is the cytoplasm. The enzyme catalyses L-glutamate 5-semialdehyde + phosphate + NADP(+) = L-glutamyl 5-phosphate + NADPH + H(+). It participates in amino-acid biosynthesis; L-proline biosynthesis; L-glutamate 5-semialdehyde from L-glutamate: step 2/2. Functionally, catalyzes the NADPH-dependent reduction of L-glutamate 5-phosphate into L-glutamate 5-semialdehyde and phosphate. The product spontaneously undergoes cyclization to form 1-pyrroline-5-carboxylate. In Cereibacter sphaeroides (strain ATCC 17029 / ATH 2.4.9) (Rhodobacter sphaeroides), this protein is Gamma-glutamyl phosphate reductase.